Reading from the N-terminus, the 180-residue chain is Molybdopterin synthase catalytic subunit (180 aa).

Positions 1 to 10 (MSSTTPTTEP) are enriched in polar residues. The interval 1 to 31 (MSSTTPTTEPDQLPPHLDPQTYPRTTTNPTL) is disordered. The span at 21–31 (TYPRTTTNPTL) shows a compositional bias: low complexity. Substrate-binding positions include 131-132 (HR), lysine 147, and 154-156 (KKE).

The protein belongs to the MoaE family. MOCS2B subfamily. As to quaternary structure, heterotetramer; composed of 2 small (MOCS2A) and 2 large (MOCS2B) subunits.

It localises to the cytoplasm. The enzyme catalyses 2 [molybdopterin-synthase sulfur-carrier protein]-C-terminal-Gly-aminoethanethioate + cyclic pyranopterin phosphate + H2O = molybdopterin + 2 [molybdopterin-synthase sulfur-carrier protein]-C-terminal Gly-Gly + 2 H(+). Its pathway is cofactor biosynthesis; molybdopterin biosynthesis. Functionally, catalytic subunit of the molybdopterin synthase complex, a complex that catalyzes the conversion of precursor Z into molybdopterin. Acts by mediating the incorporation of 2 sulfur atoms from thiocarboxylated MOCS2A into precursor Z to generate a dithiolene group. This chain is Molybdopterin synthase catalytic subunit, found in Aspergillus niger (strain ATCC MYA-4892 / CBS 513.88 / FGSC A1513).